The following is a 619-amino-acid chain: Chaperone protein HscA homolog (619 aa).

It belongs to the heat shock protein 70 family.

Functionally, chaperone involved in the maturation of iron-sulfur cluster-containing proteins. Has a low intrinsic ATPase activity which is markedly stimulated by HscB. This is Chaperone protein HscA homolog from Pseudomonas paraeruginosa (strain DSM 24068 / PA7) (Pseudomonas aeruginosa (strain PA7)).